The chain runs to 138 residues: MLRTMLKSKIHRATVTQADLHYVGSCTIDADLMEAADILEGEQIDIVDIDNGNRLTTYAITGDRGTGVIGINGAAARLISPGDLVIIIGYAQYSEEDLKNYASRVVFVDGNNKQVELGGDPAQVPDGSGLKNPRHPEA.

S25 (schiff-base intermediate with substrate; via pyruvic acid) is an active-site residue. Position 25 is a pyruvic acid (Ser) (S25). T57 is a binding site for substrate. Y58 (proton donor) is an active-site residue. 73–75 (GAA) is a substrate binding site. The disordered stretch occupies residues 116-138 (ELGGDPAQVPDGSGLKNPRHPEA).

Belongs to the PanD family. As to quaternary structure, heterooctamer of four alpha and four beta subunits. The cofactor is pyruvate. In terms of processing, is synthesized initially as an inactive proenzyme, which is activated by self-cleavage at a specific serine bond to produce a beta-subunit with a hydroxyl group at its C-terminus and an alpha-subunit with a pyruvoyl group at its N-terminus.

Its subcellular location is the cytoplasm. It catalyses the reaction L-aspartate + H(+) = beta-alanine + CO2. It functions in the pathway cofactor biosynthesis; (R)-pantothenate biosynthesis; beta-alanine from L-aspartate: step 1/1. Functionally, catalyzes the pyruvoyl-dependent decarboxylation of aspartate to produce beta-alanine. The protein is Aspartate 1-decarboxylase of Corynebacterium jeikeium (strain K411).